The primary structure comprises 177 residues: O-acetyl-ADP-ribose deacetylase (177 aa).

A Macro domain is found at 1–175 (MKTRIHVVQG…LYERLLTQQG (175 aa)). Residues 11 to 12 (DI), asparagine 25, 33 to 35 (GVD), and 122 to 126 (STGVY) contribute to the substrate site. Aspartate 35 acts as the Proton acceptor in catalysis.

It belongs to the MacroD-type family. YmdB subfamily. As to quaternary structure, homodimer. Interacts with RNase III.

The enzyme catalyses 3''-O-acetyl-ADP-D-ribose + H2O = ADP-D-ribose + acetate + H(+). It catalyses the reaction 2''-O-acetyl-ADP-D-ribose + H2O = ADP-D-ribose + acetate + H(+). Functionally, deacetylates O-acetyl-ADP ribose to yield ADP-ribose and free acetate. Down-regulates ribonuclease 3 (RNase III) activity. Acts by interacting directly with the region of the ribonuclease that is required for dimerization/activation. The protein is O-acetyl-ADP-ribose deacetylase of Shigella dysenteriae serotype 1 (strain Sd197).